The primary structure comprises 599 residues: E3 ubiquitin-protein ligase Kcmf1 (599 aa).

Residues 4-60 (HEGVSCDSCLKSNFNGRRYKCLICYDYDLCADCYEDGVTSTRHLVEHPMQCILTRSD) form a ZZ-type zinc finger. Zn(2+) is bound by residues cysteine 9, cysteine 12, cysteine 24, cysteine 27, cysteine 33, cysteine 36, histidine 46, and histidine 50. Residues 78 to 101 (FTCPYCKKMGFSDATLLEHVSAEH) form a C2H2-type zinc finger. Disordered regions lie at residues 155–193 (HGGGVRRIPGRTLGGPRTRRSNMHFSSSSGLSALSPSGR), 229–253 (DRQQVTASRQIDRLPRRAHPIVSTS), 269–294 (GSGGSGAVGSGSGGGSGATAPPNLRT), 466–486 (VEQQQQQQQLQPAMVRQVNQM), and 507–599 (NTTQ…PDTR). 2 stretches are compositionally biased toward low complexity: residues 160–170 (RRIPGRTLGGP) and 180–192 (SSSSGLSALSPSG). The span at 269 to 285 (GSGGSGAVGSGSGGGSG) shows a compositional bias: gly residues. Residues 513–532 (GTGGLGGAGATAAPGGGASG) show a composition bias toward gly residues. Positions 538 to 547 (TADRGIERRS) are enriched in basic and acidic residues. Residues 559–593 (SQQPQQQQQSTANPAASQQKYKQNASAATAAGNTN) show a composition bias toward low complexity.

The protein belongs to the KCMF1 family. In terms of assembly, interacts with poe.

It catalyses the reaction S-ubiquitinyl-[E2 ubiquitin-conjugating enzyme]-L-cysteine + [acceptor protein]-L-lysine = [E2 ubiquitin-conjugating enzyme]-L-cysteine + N(6)-ubiquitinyl-[acceptor protein]-L-lysine.. Has intrinsic E3 ubiquitin ligase activity and promotes ubiquitination. Involved in the negative regulation of the Ras/MAPK signaling pathway in the wing by acting with the E2 enzyme Unc6 and the putative E3 ligases poe and Ufd4 to mediate the ubiquitination and proteasomal degradation of rl/MAPK. This is E3 ubiquitin-protein ligase Kcmf1 from Drosophila melanogaster (Fruit fly).